The sequence spans 461 residues: Putative transcription initiation factor IIB-like protein (461 aa).

The segment at 113–142 (SESLENIQSENSENNDNFTDNNTKKSPTKS) is disordered. Positions 121–137 (SENSENNDNFTDNNTKK) are enriched in low complexity. The TFIIB-type zinc finger occupies 141–173 (KSRICSGCGSKGTLLEDQSSSVLVCSECGMIND). Zn(2+) contacts are provided by cysteine 145, cysteine 165, and cysteine 168. Tandem repeats lie at residues 246–327 (ISTI…EKKV) and 360–430 (IRRH…DVTI).

This sequence belongs to the TFIIB family.

The chain is Putative transcription initiation factor IIB-like protein from Acanthamoeba polyphaga mimivirus (APMV).